A 352-amino-acid polypeptide reads, in one-letter code: N-acetyl-gamma-glutamyl-phosphate reductase (352 aa).

Cys155 is an active-site residue.

The protein belongs to the NAGSA dehydrogenase family. Type 1 subfamily.

The protein resides in the cytoplasm. It carries out the reaction N-acetyl-L-glutamate 5-semialdehyde + phosphate + NADP(+) = N-acetyl-L-glutamyl 5-phosphate + NADPH + H(+). It participates in amino-acid biosynthesis; L-arginine biosynthesis; N(2)-acetyl-L-ornithine from L-glutamate: step 3/4. Catalyzes the NADPH-dependent reduction of N-acetyl-5-glutamyl phosphate to yield N-acetyl-L-glutamate 5-semialdehyde. This is N-acetyl-gamma-glutamyl-phosphate reductase from Cyanothece sp. (strain PCC 7425 / ATCC 29141).